Reading from the N-terminus, the 143-residue chain is Midkine (143 aa).

The first 20 residues, 1–20 (MQHRGFLLLTLLALLALTSA), serve as a signal peptide directing secretion. 5 disulfides stabilise this stretch: C37–C61, C45–C70, C52–C74, C84–C116, and C94–C126.

Belongs to the pleiotrophin family. Homodimer. Interacts with ALK. Interacts with LRP1; promotes neuronal survival. Interacts with LRP2. Interacts with NCAM1. Interacts (via C-terminal) with PTPRZ1 (via chondroitin sulfate chains); this interaction is inhibited by PTN; this interaction promotes neuronal migration. Interacts with NCL; this interaction promotes NCL clustering and lateral movements of this complex into lipid rafts leading to MDK internalization. Interacts with LRP6 and LRP8: this interaction is calcium dependent. Interacts with ITGA4. Interacts with ITGA6. Interacts with ITGB1. Interacts with ITGA4:ITGB1 complex; this interaction mediates MDK-induced osteoblast cells migration through PXN phosphorylation. Interacts with ITGA6:ITGB1 complex; this interaction mediates MDK-induced neurite outgrowth. Interacts with NOTCH2; this interaction mediates a nuclear accumulation of NOTCH2 and therefore activation of NOTCH2 signaling leading to interaction between HES1 and STAT3. Interacts with GPC2 (via heparan sulfate chain); this interaction is inhibited by heparin followed by chondroitin sulfate E; this interaction induces GPC2 clustering through heparan sulfate chain; this interaction induces neuronal cell adhesion and neurite outgrowth. Interacts with SDC3; this interaction induces SDC3 clustering; this interaction induces neuronal cell adhesion and neurite outgrowth. Interacts with SDC1. Interacts with CSPG5; this interaction promotes elongation of oligodendroglial precursor-like cells. Expressed in various tumor cell lines. In insulinoma tissue predominantly expressed in precancerous lesions.

The protein resides in the secreted. Secreted protein that functions as a cytokine and growth factor and mediates its signal through cell-surface proteoglycan and non-proteoglycan receptors. Binds cell-surface proteoglycan receptors via their chondroitin sulfate (CS) groups. Thereby regulates many processes like inflammatory response, cell proliferation, cell adhesion, cell growth, cell survival, tissue regeneration, cell differentiation and cell migration. Participates in inflammatory processes by exerting two different activities. Firstly, mediates neutrophils and macrophages recruitment to the sites of inflammation both by direct action by cooperating namely with ITGB2 via LRP1 and by inducing chemokine expression. This inflammation can be accompanied by epithelial cell survival and smooth muscle cell migration after renal and vessel damage, respectively. Secondly, suppresses the development of tolerogenic dendric cells thereby inhibiting the differentiation of regulatory T cells and also promote T cell expansion through NFAT signaling and Th1 cell differentiation. Promotes tissue regeneration after injury or trauma. After heart damage negatively regulates the recruitment of inflammatory cells and mediates cell survival through activation of anti-apoptotic signaling pathways via MAPKs and AKT pathways through the activation of angiogenesis. Also facilitates liver regeneration as well as bone repair by recruiting macrophage at trauma site and by promoting cartilage development by facilitating chondrocyte differentiation. Plays a role in brain by promoting neural precursor cells survival and growth through interaction with heparan sulfate proteoglycans. Binds PTPRZ1 and promotes neuronal migration and embryonic neurons survival. Binds SDC3 or GPC2 and mediates neurite outgrowth and cell adhesion. Binds chondroitin sulfate E and heparin leading to inhibition of neuronal cell adhesion induced by binding with GPC2. Binds CSPG5 and promotes elongation of oligodendroglial precursor-like cells. Also binds ITGA6:ITGB1 complex; this interaction mediates MDK-induced neurite outgrowth. Binds LRP1; promotes neuronal survival. Binds ITGA4:ITGB1 complex; this interaction mediates MDK-induced osteoblast cells migration through PXN phosphorylation. Binds anaplastic lymphoma kinase (ALK) which induces ALK activation and subsequent phosphorylation of the insulin receptor substrate (IRS1), followed by the activation of mitogen-activated protein kinase (MAPK) and PI3-kinase, and the induction of cell proliferation. Promotes epithelial to mesenchymal transition through interaction with NOTCH2. During arteriogenesis, plays a role in vascular endothelial cell proliferation by inducing VEGFA expression and release which in turn induces nitric oxide synthase expression. Moreover activates vasodilation through nitric oxide synthase activation. Negatively regulates bone formation in response to mechanical load by inhibiting Wnt/beta-catenin signaling in osteoblasts. In addition plays a role in hippocampal development, working memory, auditory response, early fetal adrenal gland development and the female reproductive system. This chain is Midkine, found in Homo sapiens (Human).